We begin with the raw amino-acid sequence, 262 residues long: Phosphatidylserine decarboxylase proenzyme (262 aa).

Active-site charge relay system; for autoendoproteolytic cleavage activity residues include Asp86, His142, and Ser226. Ser226 (schiff-base intermediate with substrate; via pyruvic acid; for decarboxylase activity) is an active-site residue. Ser226 carries the pyruvic acid (Ser); by autocatalysis modification.

The protein belongs to the phosphatidylserine decarboxylase family. PSD-B subfamily. Prokaryotic type I sub-subfamily. In terms of assembly, heterodimer of a large membrane-associated beta subunit and a small pyruvoyl-containing alpha subunit. It depends on pyruvate as a cofactor. In terms of processing, is synthesized initially as an inactive proenzyme. Formation of the active enzyme involves a self-maturation process in which the active site pyruvoyl group is generated from an internal serine residue via an autocatalytic post-translational modification. Two non-identical subunits are generated from the proenzyme in this reaction, and the pyruvate is formed at the N-terminus of the alpha chain, which is derived from the carboxyl end of the proenzyme. The autoendoproteolytic cleavage occurs by a canonical serine protease mechanism, in which the side chain hydroxyl group of the serine supplies its oxygen atom to form the C-terminus of the beta chain, while the remainder of the serine residue undergoes an oxidative deamination to produce ammonia and the pyruvoyl prosthetic group on the alpha chain. During this reaction, the Ser that is part of the protease active site of the proenzyme becomes the pyruvoyl prosthetic group, which constitutes an essential element of the active site of the mature decarboxylase.

The protein localises to the cell membrane. It carries out the reaction a 1,2-diacyl-sn-glycero-3-phospho-L-serine + H(+) = a 1,2-diacyl-sn-glycero-3-phosphoethanolamine + CO2. It functions in the pathway phospholipid metabolism; phosphatidylethanolamine biosynthesis; phosphatidylethanolamine from CDP-diacylglycerol: step 2/2. In terms of biological role, catalyzes the formation of phosphatidylethanolamine (PtdEtn) from phosphatidylserine (PtdSer). The chain is Phosphatidylserine decarboxylase proenzyme from Bacillus anthracis.